We begin with the raw amino-acid sequence, 581 residues long: FAD-linked oxidoreductase easE (581 aa).

Residues 1–25 form the signal peptide; that stretch reads MYRLLGPLACLALAWFFTWAPSGRC. 2 N-linked (GlcNAc...) asparagine glycosylation sites follow: N44 and N73. Positions 122–306 constitute an FAD-binding PCMH-type domain; that stretch reads HQGRIPLYSA…AQATIRVFPD (185 aa). N-linked (GlcNAc...) asparagine glycosylation is present at N369.

This sequence belongs to the oxygen-dependent FAD-linked oxidoreductase family. Requires FAD as cofactor.

The protein operates within alkaloid biosynthesis; ergot alkaloid biosynthesis. Its function is as follows. FAD-linked oxidoreductase; part of the gene cluster that mediates the biosynthesis of fungal ergot alkaloid. DmaW catalyzes the first step of ergot alkaloid biosynthesis by condensing dimethylallyl diphosphate (DMAP) and tryptophan to form 4-dimethylallyl-L-tryptophan. The second step is catalyzed by the methyltransferase easF that methylates 4-dimethylallyl-L-tryptophan in the presence of S-adenosyl-L-methionine, resulting in the formation of 4-dimethylallyl-L-abrine. The catalase easC and the FAD-dependent oxidoreductase easE then transform 4-dimethylallyl-L-abrine to chanoclavine-I which is further oxidized by easD in the presence of NAD(+), resulting in the formation of chanoclavine-I aldehyde. Agroclavine dehydrogenase easG then mediates the conversion of chanoclavine-I aldehyde to agroclavine via a non-enzymatic adduct reaction: the substrate is an iminium intermediate that is formed spontaneously from chanoclavine-I aldehyde in the presence of glutathione. Further conversion of agroclavine to paspalic acid is a two-step process involving oxidation of agroclavine to elymoclavine and of elymoclavine to paspalic acid, the second step being performed by the elymoclavine oxidase cloA. However, cloA does not encode a functional enzyme indicating that C.fusiformis terminates its ergot alkaloid pathway at elymoclavine. The polypeptide is FAD-linked oxidoreductase easE (Claviceps fusiformis (Ergot fungus)).